We begin with the raw amino-acid sequence, 782 residues long: Endonuclease MutS2 (782 aa).

Residue 336-343 (GPNTGGKT) coordinates ATP. The 76-residue stretch at 707–782 (LDLRGYRYED…GFGVTVATLK (76 aa)) folds into the Smr domain.

This sequence belongs to the DNA mismatch repair MutS family. MutS2 subfamily. In terms of assembly, homodimer. Binds to stalled ribosomes, contacting rRNA.

Its function is as follows. Endonuclease that is involved in the suppression of homologous recombination and thus may have a key role in the control of bacterial genetic diversity. In terms of biological role, acts as a ribosome collision sensor, splitting the ribosome into its 2 subunits. Detects stalled/collided 70S ribosomes which it binds and splits by an ATP-hydrolysis driven conformational change. Acts upstream of the ribosome quality control system (RQC), a ribosome-associated complex that mediates the extraction of incompletely synthesized nascent chains from stalled ribosomes and their subsequent degradation. Probably generates substrates for RQC. In Staphylococcus aureus (strain MRSA252), this protein is Endonuclease MutS2.